Here is a 35-residue protein sequence, read N- to C-terminus: Riboflavin-binding protein (35 aa).

Cys-5 and Cys-32 form a disulfide bridge.

The protein belongs to the folate receptor family.

In terms of biological role, required for the transport of riboflavin to the developing oocyte. The chain is Riboflavin-binding protein from Struthio camelus (Common ostrich).